Consider the following 2111-residue polypeptide: Fatty acid synthase beta subunit aflB (2111 aa).

Positions 200–565 are acetyltransferase (AT) domain; it reads IVTVFNGQGV…KAGTAARVIL (366 aa). An enoyl reductase (ER) domain region spans residues 618-863; sequence SRALGLPPVM…AIVDTPGVPD (246 aa). Residues 1195–1688 form a dehydratase (DH) domain region; it reads GTKPSWRKAL…SPGETLLVDI (494 aa). One can recognise a MaoC-like domain in the interval 1606 to 1708; that stretch reads EMPTSSDQYA…IVVATARSES (103 aa). The segment at 1727 to 2091 is malonyl/palmitoyl transferase (MT/PT) domain; it reads YLFTGQGSQK…FENVLAISES (365 aa).

The protein belongs to the fungal fatty acid synthetase subunit beta family. In terms of assembly, [Alpha(6)beta(6)] hexamers of two multifunctional subunits (alpha and beta).

It carries out the reaction acetyl-CoA + n malonyl-CoA + 2n NADPH + 4n H(+) = a long-chain-acyl-CoA + n CoA + n CO2 + 2n NADP(+).. The catalysed reaction is holo-[ACP] + acetyl-CoA = acetyl-[ACP] + CoA. The enzyme catalyses holo-[ACP] + malonyl-CoA = malonyl-[ACP] + CoA. It catalyses the reaction a (3R)-hydroxyacyl-[ACP] = a (2E)-enoyl-[ACP] + H2O. It carries out the reaction a 2,3-saturated acyl-[ACP] + NAD(+) = a (2E)-enoyl-[ACP] + NADH + H(+). The catalysed reaction is (9Z)-octadecenoyl-[ACP] + H2O = (9Z)-octadecenoate + holo-[ACP] + H(+). Its pathway is secondary metabolite biosynthesis. In terms of biological role, fatty acid synthase beta subunit; part of the gene cluster that mediates the biosynthesis of aspercryptins, linear lipopeptides built from six amino acids including 2 highly unusual and nonproteogenic amino acids, 2-amino-octanoic acid (2aoa) and 2-amino-dodecanol (2adol). The core structure of aspercryptins is as follows: Ser/Ala-Thr-Ile/Val-2aoa-Asn-2adol. The first step of aspercryptin biosynthesis is the generation of the fatty acid precursors, octanoic and dodecanoic acids, by the FAS subunits atnF and atnM. The fatty acid precursors are likely transformed into the corresponding alpha-amino fatty acids in three steps. First, they are hydroxylated by the cytochrome P450 monooxygenase atnE, then oxidized to the corresponding alpha-keto acids by the NAD(P)-dependent oxidoreductase atnD, and finally converted to the alpha-amino fatty acids by the PLP-dependent aminotransferases atnH or atnJ. the alpha-amino fatty acids, 2-amino-octanoic and 2-amino-dodecanoic acids, are recognized, activated, and covalently tethered to the NRPS atnA by its fourth and sixth adenylation domains. The second module of atnA is the Thr module and contains an epimerase (E) domain responsible for the epimerization of Thr to D-allo-Thr. Additionally, despite atnA having only one epimerase domain, the first amino acid of aspercryptin A1 is D-Ser, suggesting that serine is either loaded directly as D-Ser on the first module or that the epimerase domain in the threonine module epimerizes both L-Ser and L-Thr. After condensation of the hexapeptide of aspercryptin, the C-terminal reductase (TE) domain might be involved in the reductive release and production of the aldehyde hexapeptide. Further reduction would generate aspercryptins. The variety of aspercryptins produced reflects the flexibility of the atnA NRPS, allowing incorporation of alanine instead of serine, valine for isoleucine, and a C10 fatty amino alcohol instead of the C12 version. AtnB seems to be involved in the selectivity for Ile versus Val by the third module. Moreover, type B, C and D aspercryptins have an additional N-terminal cichorine, acetyl and propionyl group respectively. The sequence is that of Fatty acid synthase beta subunit aflB from Emericella nidulans (strain FGSC A4 / ATCC 38163 / CBS 112.46 / NRRL 194 / M139) (Aspergillus nidulans).